Reading from the N-terminus, the 912-residue chain is Collagen alpha-2(I) chain (912 aa).

Over residues 1 to 41 the composition is skewed to low complexity; it reads GPMGIMGPRGPPGASGAPGPQGFQGPAGEPGEPGQTGPAGA. 3 disordered regions span residues 1-206, 222-739, and 763-912; these read GPMG…GITG, IPGP…GIIG, and GPPG…RGSQ. A compositionally biased stretch (basic and acidic residues) spans 43–57; sequence AGEDGHPGKPGRPGE. 6 stretches are compositionally biased toward low complexity: residues 124-153, 178-192, 229-244, 295-327, 360-382, and 406-424; these read VGAP…SAGP, AGPR…ISGP, PGPA…RGIV, PGIR…VRGP, PVGI…RGEP, and AGIA…NGAQ. Residues 431 to 440 are compositionally biased toward gly residues; sequence GVQGGKGEQG. Composition is skewed to low complexity over residues 474-501 and 517-532; these read IPGP…SRGP and IGAP…SGIP. A compositionally biased stretch (gly residues) spans 539-548; that stretch reads GIPGGKGEIG. Composition is skewed to low complexity over residues 549-612 and 622-637; these read NPGR…QPGA and NGPV…AGPS. The segment covering 647–656 has biased composition (gly residues); sequence GSRGDGGPPG. Low complexity-rich tracts occupy residues 658-667, 728-739, 763-785, 805-815, and 830-850; these read TGFPGAAGRT, PQGIIGAPGIIG, GPPG…APGE, NAGPVGAVGAP, and PGPV…PSGP.

Belongs to the fibrillar collagen family. In terms of assembly, trimers of one alpha 2(I) and two alpha 1(I) chains. Interacts (via C-terminus) with TMEM131 (via PapD-L domain); the interaction is direct and is involved in assembly and TRAPPIII ER-to-Golgi transport complex-dependent secretion of collagen. Prolines at the third position of the tripeptide repeating unit (G-X-Y) are hydroxylated in some or all of the chains. In terms of tissue distribution, forms the fibrils of tendon, ligaments and bones. In bones, the fibrils are mineralized with calcium hydroxyapatite.

It is found in the secreted. The protein localises to the extracellular space. The protein resides in the extracellular matrix. Type I collagen is a member of group I collagen (fibrillar forming collagen). This chain is Collagen alpha-2(I) chain, found in Equus sp.